The following is a 102-amino-acid chain: Small ribosomal subunit protein uS10 (102 aa).

The protein belongs to the universal ribosomal protein uS10 family. As to quaternary structure, part of the 30S ribosomal subunit.

In terms of biological role, involved in the binding of tRNA to the ribosomes. The sequence is that of Small ribosomal subunit protein uS10 from Leptospira borgpetersenii serovar Hardjo-bovis (strain JB197).